The chain runs to 356 residues: MAEPLLSEHQHQPQTSNCTGAAVVHEEQNSERPPSAEERVPKEDSRWQSRASLQSGSRPGQEGDGGLKHQLPPLQTNACPELSCLEKGEKGQNGEDLSTGGASPSAEGEPMSESLVQPGHDSEATKLEAPVAGVEEPWGQQQRQLGKKKHRRRPSKKKRHWKPYYKLTWEEKKKFDEKQSLRASRVRAEMFAKGQPVAPYNTTQFLMDDHDQEEPDLKTGLYPKRAAAKSDDTSDEDFVEEAGEEDGGSDGMGGDGSEFLQRDFSETYERYHAESLQNMSKQELIKEYLELEKCLSRKEDENNRLRLESKRLGGVDARVRELELELDRLRAENRQLLTENELHRQQERAPPSKFGD.

2 stretches are compositionally biased toward basic and acidic residues: residues 1–11 (MAEPLLSEHQH) and 24–47 (VHEEQNSERPPSAEERVPKEDSRW). The segment at 1–160 (MAEPLLSEHQ…RRRPSKKKRH (160 aa)) is disordered. Polar residues predominate over residues 48 to 58 (QSRASLQSGSR). Residues 84–93 (CLEKGEKGQN) show a composition bias toward basic and acidic residues. Ser-98 and Ser-103 each carry phosphoserine. Residues 145–160 (LGKKKHRRRPSKKKRH) are compositionally biased toward basic residues. Residues 147-174 (KKKHRRRPSKKKRHWKPYYKLTWEEKKK) form a basic region; mediates nuclear localization and interaction with 7SK snRNA and NR3C1 region. An interaction with P-TEFb region spans residues 199–202 (PYNT). The tract at residues 207–247 (MDDHDQEEPDLKTGLYPKRAAAKSDDTSDEDFVEEAGEEDG) is autoinhibitory acidic region; in absence of 7SK snRNA interacts with the basic region preventing interaction with P-TEFb and modulating subcellular localization. Residues 209-259 (DHDQEEPDLKTGLYPKRAAAKSDDTSDEDFVEEAGEEDGGSDGMGGDGSEF) are disordered. The residue at position 230 (Ser-230) is a Phosphoserine. Phosphothreonine is present on Thr-233. Positions 233–248 (TSDEDFVEEAGEEDGG) are enriched in acidic residues. Ser-234, Ser-249, and Ser-257 each carry phosphoserine. The stretch at 280–346 (SKQELIKEYL…LTENELHRQQ (67 aa)) forms a coiled coil. The interval 283-311 (ELIKEYLELEKCLSRKEDENNRLRLESKR) is mediates interaction with CCNT1. Positions 307–352 (LESKRLGGVDARVRELELELDRLRAENRQLLTENELHRQQERAPPS) are required for inhibition of ESR1-dependent transcription. The tract at residues 337–356 (LTENELHRQQERAPPSKFGD) is disordered.

The protein belongs to the HEXIM family. As to quaternary structure, homooligomer and heterooligomer with HEXIM2; probably dimeric. Core component of the 7SK RNP complex, at least composed of 7SK RNA, LARP7, MEPCE, HEXIM1 (or HEXIM2) and P-TEFb (composed of CDK9 and CCNT1/cyclin-T1). Interacts with the N-CoR complex through NCOR1. Interacts with ESR1 and NR3C1. May interact with NF-kappa-B through RELA. Interacts with CCNT2; mediates formation of a tripartite complex with KPNA2. Part of the HDP-RNP complex composed of at least HEXIM1, PRKDC, XRCC5, XRCC6, paraspeckle proteins (SFPQ, NONO, PSPC1, RBM14, and MATR3) and NEAT1 non-coding RNA.

The protein localises to the nucleus. Its subcellular location is the cytoplasm. In terms of biological role, transcriptional regulator which functions as a general RNA polymerase II transcription inhibitor. Core component of the 7SK RNP complex: in cooperation with 7SK snRNA sequesters P-TEFb in a large inactive 7SK snRNP complex preventing RNA polymerase II phosphorylation and subsequent transcriptional elongation. May also regulate NF-kappa-B, ESR1, NR3C1 and CIITA-dependent transcriptional activity. Plays a role in the regulation of DNA virus-mediated innate immune response by assembling into the HDP-RNP complex, a complex that serves as a platform for IRF3 phosphorylation and subsequent innate immune response activation through the cGAS-STING pathway. This chain is Protein HEXIM1 (Hexim1), found in Rattus norvegicus (Rat).